The chain runs to 98 residues: Large ribosomal subunit protein eL30 (98 aa).

Belongs to the eukaryotic ribosomal protein eL30 family.

In Methanothermobacter thermautotrophicus (strain ATCC 29096 / DSM 1053 / JCM 10044 / NBRC 100330 / Delta H) (Methanobacterium thermoautotrophicum), this protein is Large ribosomal subunit protein eL30 (rpl30e).